The primary structure comprises 223 residues: Ribose-5-phosphate isomerase A (223 aa).

Residues 32 to 35 (TGST), 85 to 88 (DGAD), and 98 to 101 (KGGG) contribute to the substrate site. Glu107 (proton acceptor) is an active-site residue. Residue Lys125 participates in substrate binding.

Belongs to the ribose 5-phosphate isomerase family. Homodimer.

It catalyses the reaction aldehydo-D-ribose 5-phosphate = D-ribulose 5-phosphate. The protein operates within carbohydrate degradation; pentose phosphate pathway; D-ribose 5-phosphate from D-ribulose 5-phosphate (non-oxidative stage): step 1/1. Catalyzes the reversible conversion of ribose-5-phosphate to ribulose 5-phosphate. The polypeptide is Ribose-5-phosphate isomerase A (Marinomonas sp. (strain MWYL1)).